A 260-amino-acid polypeptide reads, in one-letter code: Glutamate racemase (260 aa).

Substrate is bound by residues D14–S15 and Y46–G47. Catalysis depends on C77, which acts as the Proton donor/acceptor. N78–T79 contacts substrate. The active-site Proton donor/acceptor is the C188. T189 to H190 is a binding site for substrate.

Belongs to the aspartate/glutamate racemases family.

The enzyme catalyses L-glutamate = D-glutamate. The protein operates within cell wall biogenesis; peptidoglycan biosynthesis. Functionally, provides the (R)-glutamate required for cell wall biosynthesis. The sequence is that of Glutamate racemase from Clostridium perfringens (strain ATCC 13124 / DSM 756 / JCM 1290 / NCIMB 6125 / NCTC 8237 / Type A).